The primary structure comprises 291 residues: tRNA dimethylallyltransferase (291 aa).

9–16 (GPTASGKT) is a binding site for ATP. 11-16 (TASGKT) serves as a coordination point for substrate. The tract at residues 34-37 (DSLQ) is interaction with substrate tRNA.

The protein belongs to the IPP transferase family. Monomer. Requires Mg(2+) as cofactor.

The enzyme catalyses adenosine(37) in tRNA + dimethylallyl diphosphate = N(6)-dimethylallyladenosine(37) in tRNA + diphosphate. Functionally, catalyzes the transfer of a dimethylallyl group onto the adenine at position 37 in tRNAs that read codons beginning with uridine, leading to the formation of N6-(dimethylallyl)adenosine (i(6)A). The protein is tRNA dimethylallyltransferase of Aster yellows witches'-broom phytoplasma (strain AYWB).